We begin with the raw amino-acid sequence, 160 residues long: Type IV major fimbrial protein FimA (160 aa).

A propeptide spans 1 to 7 (MKSLQKG) (leader sequence). Phenylalanine 8 is modified (N-methylphenylalanine). A helical transmembrane segment spans residues 8 to 28 (FTLIELMIVVAIIGILAAIAI).

Belongs to the N-Me-Phe pilin family. The pili are polar flexible filaments of about 5.4 nanometers diameter and 2.5 micrometers average length; they consist of only a single polypeptide chain arranged in a helical configuration of five subunits per turn in the assembled pilus.

It is found in the fimbrium. It localises to the membrane. Major component of the type IV fimbriae that plays an essential role in twitching motility, natural transformation, and protease secretion. The protein is Type IV major fimbrial protein FimA (fimA) of Dichelobacter nodosus (Bacteroides nodosus).